A 529-amino-acid chain; its full sequence is Peptide chain release factor 3 (529 aa).

A tr-type G domain is found at alanine 11–methionine 280. GTP-binding positions include serine 20–threonine 27, aspartate 88–histidine 92, and asparagine 142–aspartate 145.

It belongs to the TRAFAC class translation factor GTPase superfamily. Classic translation factor GTPase family. PrfC subfamily.

Its subcellular location is the cytoplasm. Increases the formation of ribosomal termination complexes and stimulates activities of RF-1 and RF-2. It binds guanine nucleotides and has strong preference for UGA stop codons. It may interact directly with the ribosome. The stimulation of RF-1 and RF-2 is significantly reduced by GTP and GDP, but not by GMP. This chain is Peptide chain release factor 3, found in Salmonella agona (strain SL483).